A 290-amino-acid polypeptide reads, in one-letter code: Elongation factor Ts (290 aa).

Positions 83–86 (TDFV) are involved in Mg(2+) ion dislocation from EF-Tu.

This sequence belongs to the EF-Ts family.

Its subcellular location is the cytoplasm. In terms of biological role, associates with the EF-Tu.GDP complex and induces the exchange of GDP to GTP. It remains bound to the aminoacyl-tRNA.EF-Tu.GTP complex up to the GTP hydrolysis stage on the ribosome. The protein is Elongation factor Ts (tsf) of Aquifex aeolicus (strain VF5).